The primary structure comprises 278 residues: Energy-coupling factor transporter ATP-binding protein EcfA1 (278 aa).

The ABC transporter domain occupies 5 to 239; the sequence is IRVQHLNYTY…GMELLRLGLD (235 aa). ATP is bound at residue 39–46; sequence GHNGSGKS. Catalysis depends on glutamate 165, which acts as the Proton acceptor.

It belongs to the ABC transporter superfamily. Energy-coupling factor EcfA family. Forms a stable energy-coupling factor (ECF) transporter complex probably composed of 2 membrane-embedded substrate-binding proteins (S component), 2 ATP-binding proteins (A component) and 2 transmembrane proteins (T component). This complex interacts with a number of substrate-specific components, including FolT and ThiT for 5-formyltetrahydrofolate and thiamine respectively.

Its subcellular location is the cell membrane. ATP-binding (A) component of a common energy-coupling factor (ECF) ABC-transporter complex. Unlike classic ABC transporters this ECF transporter provides the energy necessary to transport a number of different substrates including 5-formyltetrahydrofolate and thiamine. Expression of the complex plus FolT or ThiT in Lactococcus lactis subsp. cremoris (strain NZ9000) allows 5-formyltetrahydrofolate or thiamine uptake respectively; 5-formyltetrahydrofolate or thiamine are not taken up in the absence of FolT/ThiT or the EcfA1A2T complex. Deenergized L.lactis subsp. cremoris (treated with 2-deoxyglucose) does not take up substrate. The sequence is that of Energy-coupling factor transporter ATP-binding protein EcfA1 from Lacticaseibacillus paracasei (strain ATCC 334 / BCRC 17002 / CCUG 31169 / CIP 107868 / KCTC 3260 / NRRL B-441) (Lactobacillus paracasei).